The primary structure comprises 291 residues: MEKLLERVNHILEALPYITKYSGKTVVIKYGGAAMAKADLKESFAKDIVLLKYVGIHPVIVHGGGPEINRLLDSLKIPTEFIHGHRVTDTQTMEVVEMVLTGKVNKQIVSMINSQGGKAVGISGKDGNLAKAVKAPIEIELEGKEKQLFDVGLVGRIESINPEILHNLQKEGFIPVISPVAESVEGDSLNINADTFAGEIAGALEAEKLILLTDTEGILIDGKLATGLSRGKMKEYIRKGEISGGMIPKVECCLAAIDQGVNRTHIIDGRVSHSILIEIFTNQGIGSLIES.

Substrate contacts are provided by residues 64–65, Arg-86, and Asn-190; that span reads GG.

The protein belongs to the acetylglutamate kinase family. ArgB subfamily.

It is found in the cytoplasm. The enzyme catalyses N-acetyl-L-glutamate + ATP = N-acetyl-L-glutamyl 5-phosphate + ADP. The protein operates within amino-acid biosynthesis; L-arginine biosynthesis; N(2)-acetyl-L-ornithine from L-glutamate: step 2/4. Its function is as follows. Catalyzes the ATP-dependent phosphorylation of N-acetyl-L-glutamate. The polypeptide is Acetylglutamate kinase (Leptospira borgpetersenii serovar Hardjo-bovis (strain L550)).